The chain runs to 259 residues: Indole-diterpene biosynthesis cluster protein S (259 aa).

The next 5 helical transmembrane spans lie at 5–25 (EASG…GMVW), 64–84 (WFAL…AIIL), 87–107 (VYLI…LWVL), 134–154 (VLWF…AASF), and 221–241 (LGAG…PAAG).

This sequence belongs to the ltmS family.

Its subcellular location is the membrane. Its function is as follows. Part of the gene cluster that mediates the biosynthesis of paspalitrems, indole-diterpene (IDT) mycotoxins that are potent tremorgens in mammals. The geranylgeranyl diphosphate (GGPP) synthase idtG is proposed to catalyze the first step in IDT biosynthesis via catalysis of a series of iterative condensations of isopentenyl diphosphate (IPP) with dimethylallyl diphosphate (DMAPP), geranyl diphosphate (GPP), and farnesyl diphosphate (FPP), to form GGPP. Condensation of indole-3-glycerol phosphate with GGPP by the prenyltransferase idtC then forms 3-geranylgeranylindole (3-GGI). Epoxidation of the two terminal alkenes of the geranylgeranyl moiety by the FAD-dependent monooxygenase idtM, and cyclization by the terpene cyclase idtB then leads to the production of paspaline. The cytochrome P450 monooxygenase idtP then catalyzes oxidative elimination of the pendant methyl group at C-12 of paspaline and generates the C-10 ketone to yield 13-desoxypaxilline. The cytochrome P450 monooxygenase idtQ may catalyze the C-13 oxidation of 13-desoxypaxilline to afford paxilline. Considering that both paspalicine and paxilline were detected in C.paspali, idtQ also catalyzes the formation of paspalinine from 13-desoxypaxilline via paspalicine as an intermediate. Finally, the alpha-prenyltransferase idtF prenylates paspalinine at the C-20 or the C-21 positions to yield paspalitrems A and C, respectively. The hydroxylation of paspalitrem A at C-32 by a still unknown oxidase affords paspalitrem B. The chain is Indole-diterpene biosynthesis cluster protein S from Claviceps paspali (Rye ergot fungus).